Here is a 370-residue protein sequence, read N- to C-terminus: Lipoyl synthase, mitochondrial (370 aa).

[4Fe-4S] cluster is bound by residues cysteine 100, cysteine 105, cysteine 111, cysteine 131, cysteine 135, cysteine 138, and serine 346. One can recognise a Radical SAM core domain in the interval 116–335 (DKSRATATIM…KEVAEKLGFL (220 aa)).

The protein belongs to the radical SAM superfamily. Lipoyl synthase family. The cofactor is [4Fe-4S] cluster.

It is found in the mitochondrion. It carries out the reaction [[Fe-S] cluster scaffold protein carrying a second [4Fe-4S](2+) cluster] + N(6)-octanoyl-L-lysyl-[protein] + 2 oxidized [2Fe-2S]-[ferredoxin] + 2 S-adenosyl-L-methionine + 4 H(+) = [[Fe-S] cluster scaffold protein] + N(6)-[(R)-dihydrolipoyl]-L-lysyl-[protein] + 4 Fe(3+) + 2 hydrogen sulfide + 2 5'-deoxyadenosine + 2 L-methionine + 2 reduced [2Fe-2S]-[ferredoxin]. It functions in the pathway protein modification; protein lipoylation via endogenous pathway; protein N(6)-(lipoyl)lysine from octanoyl-[acyl-carrier-protein]: step 2/2. Functionally, catalyzes the radical-mediated insertion of two sulfur atoms into the C-6 and C-8 positions of the octanoyl moiety bound to the lipoyl domains of lipoate-dependent enzymes, thereby converting the octanoylated domains into lipoylated derivatives. The polypeptide is Lipoyl synthase, mitochondrial (lip5) (Schizosaccharomyces pombe (strain 972 / ATCC 24843) (Fission yeast)).